The following is a 281-amino-acid chain: Tumor necrosis factor ligand superfamily member 6 (281 aa).

The Cytoplasmic segment spans residues 1 to 80 (MQQPFNYPYP…LKKRGNHSTG (80 aa)). A disordered region spans residues 20 to 71 (SSPWAPPGTVLPCPTSVPRRPGQRRPPPPPPPPPLPPPPPPPPLPPLPLPPL). The span at 43-70 (RRPPPPPPPPPLPPPPPPPPLPPLPLPP) shows a compositional bias: pro residues. A helical; Signal-anchor for type II membrane protein membrane pass occupies residues 81-102 (LCLLVMFFMVLVALVGLGLGMF). Residues 103-281 (QLFHLQKELA…SQTFFGLYKL (179 aa)) are Extracellular-facing. Residues 118–128 (TSQMHTASSLE) show a composition bias toward polar residues. The segment at 118–142 (TSQMHTASSLEKQIGHPSPPPEKKE) is disordered. The 137-residue stretch at 145 to 281 (KVAHLTGKSN…SQTFFGLYKL (137 aa)) folds into the THD domain. N-linked (GlcNAc...) asparagine glycosylation is present at Asn-184. A disulfide bridge connects residues Cys-202 and Cys-233. N-linked (GlcNAc...) asparagine glycans are attached at residues Asn-250 and Asn-260.

Belongs to the tumor necrosis factor family. In terms of assembly, homotrimer. Interacts with ARHGAP9, BAIAP2L1, BTK, CACNB3, CACNB4, CRK, DLG2, DNMBP, DOCK4, EPS8L3, FGR, FYB1, FYN, HCK, ITK, ITSN2, KALRN, LYN, MACC1, MIA, MPP4, MYO15A, NCF1, NCK1, NCK2, NCKIPSD, OSTF1, PIK3R1, PSTPIP1, RIMBP3C, SAMSN1, SH3GL3, SH3PXD2B, SH3PXD2A, SH3RF2, SKAP2, SNX33, SNX9, SORBS3, SPTA1, SRC, SRGAP1, SRGAP2, SRGAP3, TEC, TJP3 and YES1. In terms of processing, the soluble form derives from the membrane form by proteolytic processing. The membrane-bound form undergoes two successive intramembrane proteolytic cleavages. The first one is processed by ADAM10 producing an N-terminal fragment, which lacks the receptor-binding extracellular domain. This ADAM10-processed FasL (FasL APL) remnant form is still membrane anchored and further processed by SPPL2A that liberates the FasL intracellular domain (FasL ICD). FasL shedding by ADAM10 is a prerequisite for subsequent intramembrane cleavage by SPPL2A in T-cells. Post-translationally, N-glycosylated. Glycosylation enhances apoptotic activity. Phosphorylated by FGR on tyrosine residues; this is required for ubiquitination and subsequent internalization. In terms of processing, monoubiquitinated.

The protein resides in the cell membrane. Its subcellular location is the cytoplasmic vesicle lumen. It localises to the lysosome lumen. The protein localises to the secreted. It is found in the nucleus. In terms of biological role, cytokine that binds to TNFRSF6/FAS, a receptor that transduces the apoptotic signal into cells. Involved in cytotoxic T-cell-mediated apoptosis, natural killer cell-mediated apoptosis and in T-cell development. Initiates fratricidal/suicidal activation-induced cell death (AICD) in antigen-activated T-cells contributing to the termination of immune responses. TNFRSF6/FAS-mediated apoptosis also has a role in the induction of peripheral tolerance. Binds to TNFRSF6B/DcR3, a decoy receptor that blocks apoptosis. Induces FAS-mediated activation of NF-kappa-B, initiating non-apoptotic signaling pathways. Can induce apoptosis but does not appear to be essential for this process. Functionally, cytoplasmic form induces gene transcription inhibition. This Homo sapiens (Human) protein is Tumor necrosis factor ligand superfamily member 6 (FASLG).